The following is a 63-amino-acid chain: Alpha-toxin CsE5 (63 aa).

An LCN-type CS-alpha/beta domain is found at 2–61 (KDGYPVDSGNCKYECLKDDYCNDLCLERKADKGYCYWGKVSCYCYGLPDNSPTKTSGKCN). 4 disulfide bridges follow: Cys-12-Cys-60, Cys-16-Cys-36, Cys-22-Cys-43, and Cys-26-Cys-45.

Belongs to the long (4 C-C) scorpion toxin superfamily. Sodium channel inhibitor family. Alpha subfamily. Expressed by the venom gland.

The protein localises to the secreted. Its function is as follows. Alpha toxins bind voltage-independently at site-3 of sodium channels (Nav) and inhibit the inactivation of the activated channels, thereby blocking neuronal transmission. The sequence is that of Alpha-toxin CsE5 from Centruroides sculpturatus (Arizona bark scorpion).